Reading from the N-terminus, the 192-residue chain is Protein CREG1 (192 aa).

The N-terminal stretch at 1–18 is a signal peptide; that stretch reads MVLLAFLCAAALAALARG. Asn-95, Asn-133, and Asn-166 each carry an N-linked (GlcNAc...) asparagine glycan.

This sequence belongs to the CREG family.

It is found in the secreted. In terms of biological role, may contribute to the transcriptional control of cell growth and differentiation. In Gallus gallus (Chicken), this protein is Protein CREG1 (CREG1).